Reading from the N-terminus, the 547-residue chain is Chaperonin GroEL (547 aa).

ATP-binding positions include 30 to 33 (TLGP), Lys51, 87 to 91 (DGTTT), Gly415, 479 to 481 (NAA), and Asp495. The disordered stretch occupies residues 525 to 547 (PKEDKPDLGGGNPGGAGGMGGMM). The segment covering 532–547 (LGGGNPGGAGGMGGMM) has biased composition (gly residues).

Belongs to the chaperonin (HSP60) family. As to quaternary structure, forms a cylinder of 14 subunits composed of two heptameric rings stacked back-to-back. Interacts with the co-chaperonin GroES.

The protein localises to the cytoplasm. The catalysed reaction is ATP + H2O + a folded polypeptide = ADP + phosphate + an unfolded polypeptide.. Together with its co-chaperonin GroES, plays an essential role in assisting protein folding. The GroEL-GroES system forms a nano-cage that allows encapsulation of the non-native substrate proteins and provides a physical environment optimized to promote and accelerate protein folding. This is Chaperonin GroEL from Blochmanniella floridana.